The following is a 275-amino-acid chain: Endolytic peptidoglycan transglycosylase RlpA (275 aa).

The first 22 residues, 1–22, serve as a signal peptide directing secretion; it reads MQIKTITLKLSAVSLGALFFSG. Cys23 carries the N-palmitoyl cysteine lipid modification. Residue Cys23 is the site of S-diacylglycerol cysteine attachment. The 76-residue stretch at 200 to 275 folds into the SPOR domain; the sequence is IYEGGNFMVQ…AFAGAFVVRE (76 aa).

This sequence belongs to the RlpA family.

Its subcellular location is the cell membrane. Lytic transglycosylase with a strong preference for naked glycan strands that lack stem peptides. The protein is Endolytic peptidoglycan transglycosylase RlpA of Campylobacter jejuni subsp. jejuni serotype O:2 (strain ATCC 700819 / NCTC 11168).